Reading from the N-terminus, the 296-residue chain is Bifunctional protein FolD (296 aa).

Residues 166-168 (GRS), Ser195, and Thr236 contribute to the NADP(+) site.

It belongs to the tetrahydrofolate dehydrogenase/cyclohydrolase family. Homodimer.

It catalyses the reaction (6R)-5,10-methylene-5,6,7,8-tetrahydrofolate + NADP(+) = (6R)-5,10-methenyltetrahydrofolate + NADPH. The catalysed reaction is (6R)-5,10-methenyltetrahydrofolate + H2O = (6R)-10-formyltetrahydrofolate + H(+). It participates in one-carbon metabolism; tetrahydrofolate interconversion. Functionally, catalyzes the oxidation of 5,10-methylenetetrahydrofolate to 5,10-methenyltetrahydrofolate and then the hydrolysis of 5,10-methenyltetrahydrofolate to 10-formyltetrahydrofolate. The sequence is that of Bifunctional protein FolD from Dehalococcoides mccartyi (strain ATCC BAA-2100 / JCM 16839 / KCTC 5957 / BAV1).